A 181-amino-acid polypeptide reads, in one-letter code: CASP-like protein 1F2 (181 aa).

The Cytoplasmic segment spans residues 1–18 (MADIETKSSQNQPLKTQN). The chain crosses the membrane as a helical span at residues 19 to 39 (IFIGAQIFLRIVVIAASFAST). Topologically, residues 40-70 (WLMLTNKQTIDIGGFVLDANYSYSPEFKFLS) are extracellular. Asn-59 is a glycosylation site (N-linked (GlcNAc...) asparagine). The chain crosses the membrane as a helical span at residues 71-91 (YANIVVGAFSFVSLLFLVLVG). At 92–100 (RRSSNPTYY) the chain is on the cytoplasmic side. Residues 101 to 121 (FILFLHDLALMSLVLGGCAAA) form a helical membrane-spanning segment. At 122 to 150 (TVIGSLGKYGNSHTGWMQICDHFGKFCKR) the chain is on the extracellular side. Residues 151 to 171 (ATTSVAFSYFSLVCLLILTIT) form a helical membrane-spanning segment. The Cytoplasmic portion of the chain corresponds to 172 to 181 (SASKSRQIQV).

It belongs to the Casparian strip membrane proteins (CASP) family. As to quaternary structure, homodimer and heterodimers.

The protein resides in the cell membrane. This chain is CASP-like protein 1F2, found in Populus trichocarpa (Western balsam poplar).